Here is a 399-residue protein sequence, read N- to C-terminus: Dual-specificity RNA methyltransferase RlmN (399 aa).

The active-site Proton acceptor is the E122. The region spanning 128–371 (ETDRGTLCVS…VRTPRGRDIL (244 aa)) is the Radical SAM core domain. An intrachain disulfide couples C135 to C374. [4Fe-4S] cluster contacts are provided by C142, C146, and C149. S-adenosyl-L-methionine contacts are provided by residues 200–201 (GE), S232, 254–256 (SLH), and N331. Residue C374 is the S-methylcysteine intermediate of the active site.

The protein belongs to the radical SAM superfamily. RlmN family. [4Fe-4S] cluster serves as cofactor.

It is found in the cytoplasm. It catalyses the reaction adenosine(2503) in 23S rRNA + 2 reduced [2Fe-2S]-[ferredoxin] + 2 S-adenosyl-L-methionine = 2-methyladenosine(2503) in 23S rRNA + 5'-deoxyadenosine + L-methionine + 2 oxidized [2Fe-2S]-[ferredoxin] + S-adenosyl-L-homocysteine. The enzyme catalyses adenosine(37) in tRNA + 2 reduced [2Fe-2S]-[ferredoxin] + 2 S-adenosyl-L-methionine = 2-methyladenosine(37) in tRNA + 5'-deoxyadenosine + L-methionine + 2 oxidized [2Fe-2S]-[ferredoxin] + S-adenosyl-L-homocysteine. In terms of biological role, specifically methylates position 2 of adenine 2503 in 23S rRNA and position 2 of adenine 37 in tRNAs. m2A2503 modification seems to play a crucial role in the proofreading step occurring at the peptidyl transferase center and thus would serve to optimize ribosomal fidelity. This is Dual-specificity RNA methyltransferase RlmN from Rhodopseudomonas palustris (strain BisB18).